Consider the following 293-residue polypeptide: 4-hydroxybenzoate octaprenyltransferase (293 aa).

8 helical membrane-spanning segments follow: residues 26-48 (PIGTLLLLYPTLWALFAAAGGMP), 98-118 (TEAKILFVLLLCIAFVLDLLL), 122-142 (TFLLSFVAVALAIIYPFMKRF), 145-165 (LPQVVLGMAFGWAIPMAYGAV), 167-187 (ESLPLECWLLFFANIFWTVAY), 218-238 (IIALLQFITLVLLVIFGWISQ), 241-261 (WGYFVVLGLSASLFSHQCWLT), and 272-292 (AFLNNHYFGLGVFFAILVGIY).

It belongs to the UbiA prenyltransferase family. It depends on Mg(2+) as a cofactor.

Its subcellular location is the cell inner membrane. It carries out the reaction all-trans-octaprenyl diphosphate + 4-hydroxybenzoate = 4-hydroxy-3-(all-trans-octaprenyl)benzoate + diphosphate. Its pathway is cofactor biosynthesis; ubiquinone biosynthesis. Catalyzes the prenylation of para-hydroxybenzoate (PHB) with an all-trans polyprenyl group. Mediates the second step in the final reaction sequence of ubiquinone-8 (UQ-8) biosynthesis, which is the condensation of the polyisoprenoid side chain with PHB, generating the first membrane-bound Q intermediate 3-octaprenyl-4-hydroxybenzoate. The sequence is that of 4-hydroxybenzoate octaprenyltransferase from Actinobacillus pleuropneumoniae serotype 3 (strain JL03).